The following is a 475-amino-acid chain: MVDVASKTGIISQIIGPVVDVEFSSGDLPKVYNAIVIDAGDKKVTCEVQQLLGNNKVRAVSMTSTDGLKRGASVLDTGSPITVPVGVPTLGRIFNVLGEPVDELGPCNAESGLPIHRPAPSFTELETKPSVFETGIKVVDLLAPYKRGGKIGLFGGAGVGKTVLIMELINNIAKAHGGVSVFGGVGERTREGNDLYAEMKESKVIDEDKLENSKVALVYGQMNEPPGARMRVGLTALTMAEYFRDVNKQDVLLFIDHIFRFVQAGSEVSALLGSMPSAVGYQPTLATEMGVLQERITSTNEGSITSIQAVYVPADDLTDPAPATTFAHLDATTVLSRGLASKGIYPAVDPLDSTSTMLQPEIVGTEHYATAQRIKETLQRYKELQDIIAILGLDELSEDDRLTVSRARKVERFLSQPFFVAEVFTGSPGKYVSLNDSIDGFNRLLNGEFDDLPEQSFYLVGDINEAIAKAAKLKG.

Position 155–162 (155–162) interacts with ATP; the sequence is GGAGVGKT.

It belongs to the ATPase alpha/beta chains family. As to quaternary structure, F-type ATPases have 2 components, CF(1) - the catalytic core - and CF(0) - the membrane proton channel. CF(1) has five subunits: alpha(3), beta(3), gamma(1), delta(1), epsilon(1). CF(0) has four main subunits: a(1), b(1), b'(1) and c(9-12).

It localises to the plastid. The protein localises to the chloroplast thylakoid membrane. It carries out the reaction ATP + H2O + 4 H(+)(in) = ADP + phosphate + 5 H(+)(out). In terms of biological role, produces ATP from ADP in the presence of a proton gradient across the membrane. The catalytic sites are hosted primarily by the beta subunits. The protein is ATP synthase subunit beta, chloroplastic of Ochrosphaera neapolitana.